A 281-amino-acid polypeptide reads, in one-letter code: Urease accessory protein UreD (281 aa).

Belongs to the UreD family. As to quaternary structure, ureD, UreF and UreG form a complex that acts as a GTP-hydrolysis-dependent molecular chaperone, activating the urease apoprotein by helping to assemble the nickel containing metallocenter of UreC. The UreE protein probably delivers the nickel.

Its subcellular location is the cytoplasm. Required for maturation of urease via the functional incorporation of the urease nickel metallocenter. This is Urease accessory protein UreD from Pseudomonas savastanoi pv. phaseolicola (strain 1448A / Race 6) (Pseudomonas syringae pv. phaseolicola (strain 1448A / Race 6)).